The chain runs to 206 residues: Ribosomal RNA small subunit methyltransferase G (206 aa).

S-adenosyl-L-methionine-binding positions include glycine 74, leucine 79, 125–126 (VE), and arginine 140.

This sequence belongs to the methyltransferase superfamily. RNA methyltransferase RsmG family.

The protein localises to the cytoplasm. It carries out the reaction guanosine(527) in 16S rRNA + S-adenosyl-L-methionine = N(7)-methylguanosine(527) in 16S rRNA + S-adenosyl-L-homocysteine. In terms of biological role, specifically methylates the N7 position of guanine in position 527 of 16S rRNA. This chain is Ribosomal RNA small subunit methyltransferase G, found in Shewanella sp. (strain ANA-3).